The sequence spans 244 residues: MATIGRETTISWLGHGTFHILTPGGKKVLIDAWVDGNPSCPDEWKQRVRSEGLDVIFLTHGHFDHIADILALANETSATIVGQFDITSWIASKGVSQDRLVGFNKGGTVEVAGIRATMTHATHSSTFTDNGVIVPMGTEAGYVLRMENGFTIYHTGDTAVTMDMQIIGDLYHPELVILPIGDHFTMDPMQAAYALKLIRPTFAIPEHYGTFPILRGTPDQLREQCNAFGVNVTVIDLKPGESVS.

It belongs to the UPF0173 family.

This chain is UPF0173 metal-dependent hydrolase RoseRS_3945, found in Roseiflexus sp. (strain RS-1).